The chain runs to 437 residues: Phosphomethylpyrimidine synthase (437 aa).

Substrate-binding positions include N69, M98, Y127, H163, 185 to 187 (SRG), 226 to 229 (DACR), and E265. Residue H269 coordinates Zn(2+). Substrate is bound at residue Y292. H333 is a Zn(2+) binding site. 3 residues coordinate [4Fe-4S] cluster: C409, C412, and C416.

This sequence belongs to the ThiC family. [4Fe-4S] cluster is required as a cofactor.

It catalyses the reaction 5-amino-1-(5-phospho-beta-D-ribosyl)imidazole + S-adenosyl-L-methionine = 4-amino-2-methyl-5-(phosphooxymethyl)pyrimidine + CO + 5'-deoxyadenosine + formate + L-methionine + 3 H(+). It functions in the pathway cofactor biosynthesis; thiamine diphosphate biosynthesis. Functionally, catalyzes the synthesis of the hydroxymethylpyrimidine phosphate (HMP-P) moiety of thiamine from aminoimidazole ribotide (AIR) in a radical S-adenosyl-L-methionine (SAM)-dependent reaction. This Clostridium botulinum (strain Kyoto / Type A2) protein is Phosphomethylpyrimidine synthase.